A 102-amino-acid polypeptide reads, in one-letter code: Putative pterin-4-alpha-carbinolamine dehydratase (102 aa).

Belongs to the pterin-4-alpha-carbinolamine dehydratase family.

The catalysed reaction is (4aS,6R)-4a-hydroxy-L-erythro-5,6,7,8-tetrahydrobiopterin = (6R)-L-erythro-6,7-dihydrobiopterin + H2O. This Burkholderia ambifaria (strain MC40-6) protein is Putative pterin-4-alpha-carbinolamine dehydratase.